Reading from the N-terminus, the 262-residue chain is Phosphatidylglycerol--prolipoprotein diacylglyceryl transferase (262 aa).

The next 4 membrane-spanning stretches (helical) occupy residues leucine 9 to valine 29, isoleucine 41 to alanine 61, isoleucine 80 to valine 100, and leucine 109 to leucine 129. Arginine 131 contributes to the a 1,2-diacyl-sn-glycero-3-phospho-(1'-sn-glycerol) binding site. A run of 3 helical transmembrane segments spans residues glutamine 167–phenylalanine 187, glycine 197–methionine 217, and leucine 227–tyrosine 247.

The protein belongs to the Lgt family.

It is found in the cell membrane. It carries out the reaction L-cysteinyl-[prolipoprotein] + a 1,2-diacyl-sn-glycero-3-phospho-(1'-sn-glycerol) = an S-1,2-diacyl-sn-glyceryl-L-cysteinyl-[prolipoprotein] + sn-glycerol 1-phosphate + H(+). The protein operates within protein modification; lipoprotein biosynthesis (diacylglyceryl transfer). Catalyzes the transfer of the diacylglyceryl group from phosphatidylglycerol to the sulfhydryl group of the N-terminal cysteine of a prolipoprotein, the first step in the formation of mature lipoproteins. In Streptococcus pneumoniae (strain JJA), this protein is Phosphatidylglycerol--prolipoprotein diacylglyceryl transferase.